A 344-amino-acid chain; its full sequence is 5,10-methenyltetrahydromethanopterin hydrogenase (344 aa).

The protein belongs to the HMD family. In terms of assembly, homotetramer.

It carries out the reaction 5,10-methenyl-5,6,7,8-tetrahydromethanopterin + H2 = 5,10-methylenetetrahydromethanopterin + H(+). The protein operates within one-carbon metabolism; methanogenesis from CO(2); 5,10-methylene-5,6,7,8-tetrahydromethanopterin from 5,10-methenyl-5,6,7,8-tetrahydromethanopterin (hydrogen route): step 1/1. With respect to regulation, activity requires salt; 100 mM sodium or potassium salts of chloride, phosphate or sulfate are equally effective. Inactivated by O(2). Catalyzes the reversible reduction of methenyl-H(4)MPT(+) to methylene-H(4)MPT. In Methanothermobacter marburgensis (strain ATCC BAA-927 / DSM 2133 / JCM 14651 / NBRC 100331 / OCM 82 / Marburg) (Methanobacterium thermoautotrophicum), this protein is 5,10-methenyltetrahydromethanopterin hydrogenase.